Consider the following 320-residue polypeptide: Malate dehydrogenase (320 aa).

Residues 10-15 (GSGMIG) and Asp-34 contribute to the NAD(+) site. The substrate site is built by Arg-83 and Arg-89. Residues Asn-96 and 119 to 121 (ITN) contribute to the NAD(+) site. Substrate is bound by residues Asn-121 and Arg-152. Residue His-176 is the Proton acceptor of the active site.

This sequence belongs to the LDH/MDH superfamily. MDH type 3 family.

The enzyme catalyses (S)-malate + NAD(+) = oxaloacetate + NADH + H(+). Catalyzes the reversible oxidation of malate to oxaloacetate. This is Malate dehydrogenase from Bartonella quintana (strain Toulouse) (Rochalimaea quintana).